A 459-amino-acid polypeptide reads, in one-letter code: Cysteine--tRNA ligase (459 aa).

Cysteine 28 lines the Zn(2+) pocket. The 'HIGH' region motif lies at 30-40 (VTVYDLCHIGH). Positions 209, 234, and 238 each coordinate Zn(2+). A 'KMSKS' region motif is present at residues 266-270 (KMSKS). Residue lysine 269 participates in ATP binding.

The protein belongs to the class-I aminoacyl-tRNA synthetase family. In terms of assembly, monomer. Zn(2+) serves as cofactor.

The protein resides in the cytoplasm. It carries out the reaction tRNA(Cys) + L-cysteine + ATP = L-cysteinyl-tRNA(Cys) + AMP + diphosphate. The chain is Cysteine--tRNA ligase from Haemophilus influenzae (strain PittGG).